We begin with the raw amino-acid sequence, 877 residues long: Probable alpha/beta-glucosidase agdC (877 aa).

A signal peptide spans 1–14 (MLGSLLLLAPLAGA). 3 N-linked (GlcNAc...) asparagine glycosylation sites follow: Asn171, Asn293, and Asn373. Asp422 (nucleophile) is an active-site residue. The active site involves Glu425. The interval 432–476 (DPCTDPERYSSENNLPPAPPPVRSSSPRPLPGFPADFQPSSASRS) is disordered. Over residues 447 to 463 (PPAPPPVRSSSPRPLPG) the composition is skewed to pro residues. A glycan (N-linked (GlcNAc...) asparagine) is linked at Asn508. The active-site Proton donor is the Asp573. Asn574, Asn610, and Asn744 each carry an N-linked (GlcNAc...) asparagine glycan.

This sequence belongs to the glycosyl hydrolase 31 family.

Its subcellular location is the secreted. It catalyses the reaction Hydrolysis of terminal, non-reducing (1-&gt;4)-linked alpha-D-glucose residues with release of alpha-D-glucose.. It carries out the reaction Hydrolysis of terminal, non-reducing beta-D-glucosyl residues with release of beta-D-glucose.. In terms of biological role, glucosidase involved in the degradation of cellulosic biomass. Has both alpha- and beta-glucosidase activity. The protein is Probable alpha/beta-glucosidase agdC (agdC) of Aspergillus flavus (strain ATCC 200026 / FGSC A1120 / IAM 13836 / NRRL 3357 / JCM 12722 / SRRC 167).